The sequence spans 446 residues: Glutamine synthetase (446 aa).

A GS beta-grasp domain is found at 15–102 (RDIRFVRLWF…MFCDITMPDG (88 aa)). Residues 109-446 (SRHVLRRQLA…PYELKNYLSL (338 aa)) enclose the GS catalytic domain. Positions 132 and 134 each coordinate Mg(2+). Residue glutamate 184 participates in ATP binding. Residues glutamate 189 and glutamate 196 each coordinate Mg(2+). Glycine 241 lines the L-glutamate pocket. Position 245 (histidine 245) interacts with Mg(2+). Residues 247–249 (HMS) and serine 249 each bind ATP. L-glutamate contacts are provided by arginine 298, glutamate 304, and arginine 316. The ATP site is built by arginine 316 and arginine 321. Glutamate 336 contributes to the Mg(2+) binding site. Arginine 338 lines the L-glutamate pocket. Lysine 363 is covalently cross-linked (Isoglutamyl lysine isopeptide (Lys-Gln) (interchain with Q-Cter in protein Pup)).

Belongs to the glutamine synthetase family. Oligomer of 12 subunits arranged in the form of two hexagons. In its feedback-inhibited form, interacts with TnrA in order to block its DNA-binding activity. Mg(2+) serves as cofactor.

It localises to the cytoplasm. It carries out the reaction L-glutamate + NH4(+) + ATP = L-glutamine + ADP + phosphate + H(+). Inhibited by glutamine. Glutamine synthetase (GS) is an unusual multitasking protein that functions as an enzyme, a transcription coregulator, and a chaperone in ammonium assimilation and in the regulation of genes involved in nitrogen metabolism. It catalyzes the ATP-dependent biosynthesis of glutamine from glutamate and ammonia. Feedback-inhibited GlnA also interacts with and regulates the activity of the transcriptional regulator TnrA. During nitrogen limitation, TnrA is in its DNA-binding active state and turns on the transcription of genes required for nitrogen assimilation. Under conditions of nitrogen excess, feedback-inhibited GlnA forms a stable complex with TnrA, which inhibits its DNA-binding activity. In contrast, feedback-inhibited GlnA acts as a chaperone to stabilize the DNA-binding activity of GlnR, which represses the transcription of nitrogen assimilation genes. The chain is Glutamine synthetase from Mycolicibacterium smegmatis (strain ATCC 700084 / mc(2)155) (Mycobacterium smegmatis).